Reading from the N-terminus, the 491-residue chain is MGQIVTFFQEVPHIIEEVMNIVLITLSLLAILKGIYNVMTCGLIGLLTFLFLCGKSCSTIYKDNYRLMQLNLDMSGLNATMPLSCSKNNSHHYIQVFNTTGLELTLTNDSLIGHKWCNLSDAHKKDTYDHTLMSIISTFHLSIPNFNHYEAMACDFNGGKISIQYNLSHSSETDAMNHCGTVANGVLEVFRRMTWCTHCDTPLGASIAGFNCVRTSYKYLIIQNTTWEDHCTMSRPSPMGYLSLLSQRAREIYISRRLMGTFTWTLSDSEGNDLPGGYCLQRWMLIEAEMKCFGNTAVAKCNQQHDEEFCDMLRLFDFNKEAIHRLRVEAEKSISLINKAVNSLINDQLIMRNHLRDIMGIPYCNYSRFWYLNDTRSGRTSLPKCWMVSNGSYLNETHFSSDIEQEANNMITEMLRKEYERRQGTTPLGLVDLFVFSTSFYLISVFLHLIKIPTHRHLVGKPCPKPHRLNHMGVCSCGLYKQPGLPTKWKR.

Gly2 is lipidated: N-myristoyl glycine; by host. The Extracellular segment spans residues 2–17 (GQIVTFFQEVPHIIEE). Residues 18-33 (VMNIVLITLSLLAILK) traverse the membrane as a helical segment. Topologically, residues 34–58 (GIYNVMTCGLIGLLTFLFLCGKSCS) are cytoplasmic. Cys57 provides a ligand contact to Zn(2+). Residues 59–432 (TIYKDNYRLM…QGTTPLGLVD (374 aa)) are Extracellular-facing. 6 N-linked (GlcNAc...) asparagine; by host glycosylation sites follow: Asn78, Asn88, Asn98, Asn108, Asn118, and Asn166. Cystine bridges form between Cys85-Cys231, Cys117-Cys154, Cys179-Cys212, Cys279-Cys292, Cys301-Cys310, and Cys364-Cys385. N-linked (GlcNAc...) asparagine; by host glycosylation occurs at Asn224. Asn365, Asn373, Asn390, and Asn395 each carry an N-linked (GlcNAc...) asparagine; by host glycan. A helical membrane pass occupies residues 433 to 453 (LFVFSTSFYLISVFLHLIKIP). Topologically, residues 454–491 (THRHLVGKPCPKPHRLNHMGVCSCGLYKQPGLPTKWKR) are cytoplasmic. His455, His457, Cys463, His467, Cys475, and Cys477 together coordinate Zn(2+).

It belongs to the arenaviridae GPC protein family. As to quaternary structure, interacts with glycoprotein G2. Part of the GP complex (GP-C) together with glycoprotein G1 and glycoprotein G2. The GP-complex interacts with protein Z, which interacts with ribonucleocapsid; these interactions may induce virion budding. Homotrimer; disulfide-linked. In pre-fusion state, G1 homotrimers bind G2 homotrimers via ionic interactions. Part of the GP complex (GP-C) together with glycoprotein G2 and the stable signal peptide. The GP-complex interacts with protein Z, which interacts with ribonucleocapsid; these interactions may induce virion budding. In terms of assembly, homotrimer. Interacts with the stable signal peptide. In pre-fusion state, G2 homotrimers bind G1 homotrimers via ionic interactions. Part of the GP complex (GP-C) together with glycoprotein G1 and the stable signal peptide. Acidification in the endosome triggers rearrangements, which ultimately leads to a 6 helix bundle formed by the two heptad repeat domains (HR1 and HR2) in post-fusion state. The GP-complex interacts with protein Z, which interacts with ribonucleocapsid; these interactions may induce virion budding. In terms of processing, specific enzymatic cleavages in vivo yield mature proteins. GP-C polyprotein is cleaved in the endoplasmic reticulum by the host protease MBTPS1. Only cleaved glycoprotein is incorporated into virions. Post-translationally, the SSP remains stably associated with the GP complex following cleavage by signal peptidase and plays crucial roles in the trafficking of GP through the secretory pathway. Myristoylation is necessary for GP2-mediated fusion activity.

Its subcellular location is the virion membrane. It is found in the host endoplasmic reticulum membrane. The protein localises to the host Golgi apparatus membrane. It localises to the host cell membrane. Its function is as follows. Functions as a cleaved signal peptide that is retained as the third component of the GP complex (GP-C). Helps to stabilize the spike complex in its native conformation. The SSP is required for efficient glycoprotein expression, post-translational maturation cleavage of G1 and G2, glycoprotein transport to the cell surface plasma membrane, formation of infectious virus particles, and acid pH-dependent glycoprotein-mediated cell fusion. In terms of biological role, forms the virion spikes together with glycoprotein G2. The glycoprotein spike trimers are connected to the underlying matrix. Mediates virus attachment to host receptor alpha-dystroglycan DAG1. This attachment induces virion internalization predominantly through clathrin- and caveolin-independent endocytosis. Functionally, forms the virion spikes together with glycoprotein G1. The glycoprotein spike trimers are connected to the underlying matrix. Class I viral fusion protein that directs fusion of viral and host endosomal membranes, leading to delivery of the nucleocapsid into the cytoplasm. Membrane fusion is mediated by irreversible conformational changes induced by acidification. The sequence is that of Pre-glycoprotein polyprotein GP complex from Mobala mammarenavirus (isolate Rat/Central African Republic/Acar 3080/1983) (MOBV).